Here is a 193-residue protein sequence, read N- to C-terminus: Putative RNA methyltransferase At5g10620 (193 aa).

S-adenosyl-L-methionine is bound by residues Leu110, Gly142, and 161–166 (LSSMVL).

The protein belongs to the RNA methyltransferase RlmH family.

The chain is Putative RNA methyltransferase At5g10620 from Arabidopsis thaliana (Mouse-ear cress).